Here is a 365-residue protein sequence, read N- to C-terminus: Phosphoserine aminotransferase (365 aa).

R42 is a binding site for L-glutamate. Pyridoxal 5'-phosphate contacts are provided by residues 76 to 77 (AR), W103, T154, D175, and Q198. An N6-(pyridoxal phosphate)lysine modification is found at K199. 242-243 (NT) provides a ligand contact to pyridoxal 5'-phosphate.

The protein belongs to the class-V pyridoxal-phosphate-dependent aminotransferase family. SerC subfamily. In terms of assembly, homodimer. Requires pyridoxal 5'-phosphate as cofactor.

Its subcellular location is the cytoplasm. It carries out the reaction O-phospho-L-serine + 2-oxoglutarate = 3-phosphooxypyruvate + L-glutamate. The enzyme catalyses 4-(phosphooxy)-L-threonine + 2-oxoglutarate = (R)-3-hydroxy-2-oxo-4-phosphooxybutanoate + L-glutamate. The protein operates within amino-acid biosynthesis; L-serine biosynthesis; L-serine from 3-phospho-D-glycerate: step 2/3. It participates in cofactor biosynthesis; pyridoxine 5'-phosphate biosynthesis; pyridoxine 5'-phosphate from D-erythrose 4-phosphate: step 3/5. Its function is as follows. Catalyzes the reversible conversion of 3-phosphohydroxypyruvate to phosphoserine and of 3-hydroxy-2-oxo-4-phosphonooxybutanoate to phosphohydroxythreonine. The protein is Phosphoserine aminotransferase of Blochmanniella floridana.